Consider the following 218-residue polypeptide: Acetoacetyl-CoA:acetate/butyrate CoA transferase alpha subunit (218 aa).

24–30 (GGFLNCG) serves as a coordination point for CoA.

The protein belongs to the 3-oxoacid CoA-transferase subunit A family. In terms of assembly, heterotetramer composed of two alpha subunits (CtfA) and two beta subunits (CtfB).

The enzyme catalyses acetoacetate + butanoyl-CoA = acetoacetyl-CoA + butanoate. It catalyses the reaction acetoacetate + acetyl-CoA = acetoacetyl-CoA + acetate. With respect to regulation, the acetate and butyrate conversion reactions are inhibited in vitro by physiological levels of acetone and butanol. Its function is as follows. Catalyzes the transfer of CoA from acetoacetyl-CoA to acetate, butyrate and propionate. Also shows low activity with valerate, isobutyrate and crotonate. Plays an important role in the metabolic shift between the acid-producing and solvent-forming states of C.acetobutylicum. Acts mainly to detoxify the medium by removing the acetate and butyrate excreted earlier in the fermentation. The chain is Acetoacetyl-CoA:acetate/butyrate CoA transferase alpha subunit from Clostridium acetobutylicum (strain ATCC 824 / DSM 792 / JCM 1419 / IAM 19013 / LMG 5710 / NBRC 13948 / NRRL B-527 / VKM B-1787 / 2291 / W).